We begin with the raw amino-acid sequence, 506 residues long: Galactose/methyl galactoside import ATP-binding protein MglA (506 aa).

2 ABC transporter domains span residues 14-249 (LTMT…VGRE) and 264-506 (VILE…AKYL). ATP is bound at residue 46–53 (GENGAGKS).

Belongs to the ABC transporter superfamily. Galactose/methyl galactoside importer (TC 3.A.1.2.3) family. In terms of assembly, the complex is composed of one ATP-binding protein (MglA), two transmembrane proteins (MglC) and a solute-binding protein (MglB).

The protein resides in the cell inner membrane. It carries out the reaction D-galactose(out) + ATP + H2O = D-galactose(in) + ADP + phosphate + H(+). It catalyses the reaction methyl beta-D-galactoside(out) + ATP + H2O = methyl beta-D-galactoside(in) + ADP + phosphate + H(+). Functionally, part of the ABC transporter complex MglABC involved in galactose/methyl galactoside import. Responsible for energy coupling to the transport system. This Mannheimia succiniciproducens (strain KCTC 0769BP / MBEL55E) protein is Galactose/methyl galactoside import ATP-binding protein MglA.